A 200-amino-acid chain; its full sequence is Octanoyltransferase (200 aa).

One can recognise a BPL/LPL catalytic domain in the interval 27-200 (GAEDDQLWLV…WAELFSARWR (174 aa)). Substrate-binding positions include 66–73 (RGGQITYH), 134–136 (SLG), and 147–149 (GIA). The Acyl-thioester intermediate role is filled by C165.

Belongs to the LipB family.

The protein resides in the cytoplasm. It catalyses the reaction octanoyl-[ACP] + L-lysyl-[protein] = N(6)-octanoyl-L-lysyl-[protein] + holo-[ACP] + H(+). It functions in the pathway protein modification; protein lipoylation via endogenous pathway; protein N(6)-(lipoyl)lysine from octanoyl-[acyl-carrier-protein]: step 1/2. Catalyzes the transfer of endogenously produced octanoic acid from octanoyl-acyl-carrier-protein onto the lipoyl domains of lipoate-dependent enzymes. Lipoyl-ACP can also act as a substrate although octanoyl-ACP is likely to be the physiological substrate. The protein is Octanoyltransferase of Dichelobacter nodosus (strain VCS1703A).